The sequence spans 340 residues: Chitinase 7 (340 aa).

Residues 1–32 (MIAARAANLQVAMKALALAVLALAYAAATARA) form the signal peptide. The 41-residue stretch at 33–73 (EQCGRQAGGARCPNRLCCSRWGWCGLTDDYCKGGCQSQCRV) folds into the Chitin-binding type-1 domain. Disulfide bonds link Cys-35/Cys-50, Cys-44/Cys-56, Cys-49/Cys-63, Cys-67/Cys-71, Cys-118/Cys-173, Cys-185/Cys-193, and Cys-293/Cys-323.

The protein belongs to the glycosyl hydrolase 19 family. Chitinase class I subfamily. As to expression, expressed in pistils, stamens and lodicules.

The enzyme catalyses Random endo-hydrolysis of N-acetyl-beta-D-glucosaminide (1-&gt;4)-beta-linkages in chitin and chitodextrins.. Functionally, hydrolyzes chitin and may play a role in defense against fungal pathogens containing chitin. The chain is Chitinase 7 (Cht7) from Oryza sativa subsp. indica (Rice).